The chain runs to 234 residues: Thymidylate kinase (234 aa).

Residue 21–28 (GGEGTGKS) participates in ATP binding.

This sequence belongs to the thymidylate kinase family.

The catalysed reaction is dTMP + ATP = dTDP + ADP. Phosphorylation of dTMP to form dTDP in both de novo and salvage pathways of dTTP synthesis. In Rhizobium meliloti (strain 1021) (Ensifer meliloti), this protein is Thymidylate kinase.